The chain runs to 160 residues: S-ribosylhomocysteine lyase (160 aa).

The Fe cation site is built by His57, His61, and Cys127.

Belongs to the LuxS family. As to quaternary structure, homodimer. It depends on Fe cation as a cofactor.

It catalyses the reaction S-(5-deoxy-D-ribos-5-yl)-L-homocysteine = (S)-4,5-dihydroxypentane-2,3-dione + L-homocysteine. In terms of biological role, involved in the synthesis of autoinducer 2 (AI-2) which is secreted by bacteria and is used to communicate both the cell density and the metabolic potential of the environment. The regulation of gene expression in response to changes in cell density is called quorum sensing. Catalyzes the transformation of S-ribosylhomocysteine (RHC) to homocysteine (HC) and 4,5-dihydroxy-2,3-pentadione (DPD). The sequence is that of S-ribosylhomocysteine lyase from Streptococcus pyogenes serotype M4 (strain MGAS10750).